The following is a 313-amino-acid chain: 18S rRNA aminocarboxypropyltransferase (313 aa).

Positions Met1–Arg30 are disordered. S-adenosyl-L-methionine is bound by residues Ser62, Val110, Leu133, and Trp148. Residues Lys215–Asp228 show a composition bias toward basic and acidic residues. The segment at Lys215–Arg313 is disordered. Over residues Arg237–Thr246 the composition is skewed to polar residues. Residues Ser247–Asp257 are compositionally biased toward acidic residues. Residues Ser286 and Ser289 each carry the phosphoserine modification.

The protein belongs to the TDD superfamily. TSR3 family.

It is found in the cytoplasm. Its subcellular location is the nucleus. It catalyses the reaction an N(1)-methylpseudouridine in rRNA + S-adenosyl-L-methionine = N(1)-methyl-N(3)-[(3S)-3-amino-3-carboxypropyl]pseudouridine in rRNA + S-methyl-5'-thioadenosine + H(+). It carries out the reaction N(1)-methylpseudouridine(1191) in yeast 18S rRNA + S-adenosyl-L-methionine = N(1)-methyl-N(3)-[(3S)-3-amino-3-carboxypropyl]pseudouridine(1191) in yeast 18S rRNA + S-methyl-5'-thioadenosine + H(+). In terms of biological role, aminocarboxypropyltransferase that catalyzes the aminocarboxypropyl transfer on pseudouridine at position 1191 (Psi1191) in 18S rRNA. It constitutes the last step in biosynthesis of the hypermodified N1-methyl-N3-(3-amino-3-carboxypropyl) pseudouridine (m1acp3-Psi) conserved in eukaryotic 18S rRNA. Required for processing 35S pre-rRNA at site D. The polypeptide is 18S rRNA aminocarboxypropyltransferase (Saccharomyces cerevisiae (strain ATCC 204508 / S288c) (Baker's yeast)).